The sequence spans 144 residues: Maximins 2/H8 type 1 (144 aa).

Positions 1–18 (MNFKYIVAVSFLIASAYA) are cleaved as a signal peptide. Residues 19-43 (RSEENEIQSLSQRDVLEEESLREMR) constitute a propeptide that is removed on maturation. Asn70 is modified (asparagine amide). The propeptide occupies 74–123 (TAEEHEVMKRLETVMRDLDSLDYPEEASERETRGFNQEEIANLFTKKEKR). Isoleucine amide is present on Ile143.

Belongs to the bombinin family. Expressed by the skin glands.

It localises to the secreted. Its function is as follows. Maximin-2 shows antibacterial activity against both Gram-positive and Gram-negative bacteria. It also shows antimicrobial activity against the fungus C.albicans, but not against A.flavus nor P.uticale. It has little hemolytic activity. Functionally, maximin-H8 shows antimicrobial activity against bacteria and against the fungus C.albicans. Shows strong hemolytic activity. In Bombina maxima (Giant fire-bellied toad), this protein is Maximins 2/H8 type 1.